Here is a 367-residue protein sequence, read N- to C-terminus: Protein RecA (367 aa).

Residue 73 to 80 (GPESSGKT) coordinates ATP.

This sequence belongs to the RecA family.

The protein resides in the cytoplasm. Its function is as follows. Can catalyze the hydrolysis of ATP in the presence of single-stranded DNA, the ATP-dependent uptake of single-stranded DNA by duplex DNA, and the ATP-dependent hybridization of homologous single-stranded DNAs. It interacts with LexA causing its activation and leading to its autocatalytic cleavage. In Delftia acidovorans (strain DSM 14801 / SPH-1), this protein is Protein RecA.